Here is a 143-residue protein sequence, read N- to C-terminus: Nucleoside diphosphate kinase (143 aa).

Positions 11, 59, 87, 93, 104, and 114 each coordinate ATP. H117 serves as the catalytic Pros-phosphohistidine intermediate.

The protein belongs to the NDK family. As to quaternary structure, homotetramer. Mg(2+) serves as cofactor.

It localises to the cytoplasm. The catalysed reaction is a 2'-deoxyribonucleoside 5'-diphosphate + ATP = a 2'-deoxyribonucleoside 5'-triphosphate + ADP. It catalyses the reaction a ribonucleoside 5'-diphosphate + ATP = a ribonucleoside 5'-triphosphate + ADP. Its function is as follows. Major role in the synthesis of nucleoside triphosphates other than ATP. The ATP gamma phosphate is transferred to the NDP beta phosphate via a ping-pong mechanism, using a phosphorylated active-site intermediate. This Thioalkalivibrio sulfidiphilus (strain HL-EbGR7) protein is Nucleoside diphosphate kinase.